The primary structure comprises 339 residues: N-acetylmuramate/N-acetylglucosamine kinase (339 aa).

It belongs to the kinase AmgK family.

The enzyme catalyses N-acetyl-D-muramate + ATP = N-acetyl-alpha-D-muramate 1-phosphate + ADP + H(+). It carries out the reaction N-acetyl-D-glucosamine + ATP = N-acetyl-alpha-D-glucosamine 1-phosphate + ADP + H(+). Its pathway is cell wall biogenesis; peptidoglycan recycling. Functionally, sugar kinase that catalyzes the ATP-dependent phosphorylation of N-acetylmuramate (MurNAc) and N-acetylglucosamine (GlcNAc) at its C1 hydroxyl group, leading to MurNAc alpha-1P and GlcNAc alpha-1P, respectively. Is involved in peptidoglycan recycling as part of a cell wall recycling pathway that bypasses de novo biosynthesis of the peptidoglycan precursor UDP-MurNAc. Plays a role in intrinsic resistance to fosfomycin, which targets the de novo synthesis of UDP-MurNAc. Is also able to use N-acetylgalactosamine (GalNAc) as a substrate, but not N-acetylmannosamine, N-deacetylated sugars or glucose. In Pseudomonas putida (strain ATCC 47054 / DSM 6125 / CFBP 8728 / NCIMB 11950 / KT2440), this protein is N-acetylmuramate/N-acetylglucosamine kinase.